Consider the following 401-residue polypeptide: Solute carrier family 22 member 17 (401 aa).

10 helical membrane-spanning segments follow: residues 10-30 (GIVLLTLGLVGPCGVGGAAAG), 35-55 (IMALRFLLGFLLAGVDLGVYL), 69-89 (VALAGELVGVGGHFLFLGLAL), 100-120 (MITAPCILFLFYGWPGLFLES), 184-203 (NIWKNLLILGFTNFIAHAIR), 218-238 (FYLCSLLASGTAALACVFLGV), 247-267 (GILLLSMTLTGIASLVLLGLW), 277-297 (TFSVLGLFSSQASAILSTLLA), 309-329 (GLGLIMALGALGGLSCPAQRL), and 336-356 (FLQHVVLAACALLCILSIMLL).

It belongs to the major facilitator (TC 2.A.1) superfamily. Organic cation transporter (TC 2.A.1.19) family. In terms of tissue distribution, widely expressed.

It is found in the cell membrane. It localises to the vacuole membrane. Functionally, cell surface receptor for LCN2 (24p3) that plays a key role in iron homeostasis and transport. Able to bind iron-bound LCN2 (holo-24p3), followed by internalization of holo-24p3 and release of iron, thereby increasing intracellular iron concentration and leading to inhibition of apoptosis. Also binds iron-free LCN2 (apo-24p3), followed by internalization of apo-24p3 and its association with an intracellular siderophore, leading to iron chelation and iron transfer to the extracellular medium, thereby reducing intracellular iron concentration and resulting in apoptosis. This Mus musculus (Mouse) protein is Solute carrier family 22 member 17 (Slc22a17).